A 437-amino-acid polypeptide reads, in one-letter code: Argininosuccinate lyase (437 aa).

This sequence belongs to the lyase 1 family. Argininosuccinate lyase subfamily.

Its subcellular location is the cytoplasm. The catalysed reaction is 2-(N(omega)-L-arginino)succinate = fumarate + L-arginine. Its pathway is amino-acid biosynthesis; L-arginine biosynthesis; L-arginine from L-ornithine and carbamoyl phosphate: step 3/3. The polypeptide is Argininosuccinate lyase (Clostridium novyi (strain NT)).